The following is a 403-amino-acid chain: Acetylornithine/succinyldiaminopimelate aminotransferase (403 aa).

Pyridoxal 5'-phosphate contacts are provided by residues 107–108 (GA) and phenylalanine 140. Arginine 143 is a N(2)-acetyl-L-ornithine binding site. 225 to 228 (DEVQ) contributes to the pyridoxal 5'-phosphate binding site. Lysine 254 carries the post-translational modification N6-(pyridoxal phosphate)lysine. Threonine 282 lines the N(2)-acetyl-L-ornithine pocket. Pyridoxal 5'-phosphate is bound at residue threonine 283.

It belongs to the class-III pyridoxal-phosphate-dependent aminotransferase family. ArgD subfamily. As to quaternary structure, homodimer. The cofactor is pyridoxal 5'-phosphate.

Its subcellular location is the cytoplasm. The catalysed reaction is N(2)-acetyl-L-ornithine + 2-oxoglutarate = N-acetyl-L-glutamate 5-semialdehyde + L-glutamate. The enzyme catalyses N-succinyl-(2S,6S)-2,6-diaminopimelate + 2-oxoglutarate = (S)-2-succinylamino-6-oxoheptanedioate + L-glutamate. Its pathway is amino-acid biosynthesis; L-arginine biosynthesis; N(2)-acetyl-L-ornithine from L-glutamate: step 4/4. The protein operates within amino-acid biosynthesis; L-lysine biosynthesis via DAP pathway; LL-2,6-diaminopimelate from (S)-tetrahydrodipicolinate (succinylase route): step 2/3. Functionally, involved in both the arginine and lysine biosynthetic pathways. The protein is Acetylornithine/succinyldiaminopimelate aminotransferase of Photorhabdus laumondii subsp. laumondii (strain DSM 15139 / CIP 105565 / TT01) (Photorhabdus luminescens subsp. laumondii).